A 95-amino-acid polypeptide reads, in one-letter code: uncharacterized protein (95 aa).

This is an uncharacterized protein from Acidianus hospitalis (AFV-1).